The sequence spans 369 residues: Glutamate 5-kinase (369 aa).

Residue K9 participates in ATP binding. S49, D136, and N148 together coordinate substrate. ATP-binding positions include 168–169 (TD) and 210–216 (TGGMLTK). A PUA domain is found at 275-355 (QGSIWVDKGA…KGVLIYRDDW (81 aa)).

This sequence belongs to the glutamate 5-kinase family.

It localises to the cytoplasm. It catalyses the reaction L-glutamate + ATP = L-glutamyl 5-phosphate + ADP. Its pathway is amino-acid biosynthesis; L-proline biosynthesis; L-glutamate 5-semialdehyde from L-glutamate: step 1/2. Its function is as follows. Catalyzes the transfer of a phosphate group to glutamate to form L-glutamate 5-phosphate. This chain is Glutamate 5-kinase, found in Streptococcus pneumoniae (strain Hungary19A-6).